The following is a 210-amino-acid chain: MDNLSPEEVQLRAHQVTDESLESTRRILGLAIESQDAGIKTITMLDEQGEQLNRIEEGMDQINKDMREAEKTLTELNKCCGLCICPCNRTKNFESGKNYKATWGDGGDNSPSNVVSKQPSRITNGQPQQTTGAASGGYIKRITNDAREDEMEENLTQVGSILGNLKNMALDMGNEIDAQNQQIQKITEKADTNKNRIDIANTRAKKLIDS.

Position 1 is an N-acetylmethionine (M1). Phosphoserine occurs at positions 5, 20, 23, and 34. The 63-residue stretch at 14-76 (HQVTDESLES…REAEKTLTEL (63 aa)) folds into the t-SNARE coiled-coil homology 1 domain. Residues 23–76 (STRRILGLAIESQDAGIKTITMLDEQGEQLNRIEEGMDQINKDMREAEKTLTEL) are a coiled coil. 5 S-palmitoyl cysteine lipidation sites follow: C79, C80, C83, C85, and C87. The tract at residues 104 to 135 (GDGGDNSPSNVVSKQPSRITNGQPQQTTGAAS) is disordered. A compositionally biased stretch (polar residues) spans 109–133 (NSPSNVVSKQPSRITNGQPQQTTGA). Residues S110 and S160 each carry the phosphoserine modification. In terms of domain architecture, t-SNARE coiled-coil homology 2 spans 145 to 207 (DAREDEMEEN…DIANTRAKKL (63 aa)).

Belongs to the SNAP-25 family. As to quaternary structure, homotetramer (via coiled-coil domain), also forms heterotetramers with STX4 and VAMP3. Found in a complex with VAMP8 and STX1A. Found in a complex with VAMP8 and STX4 in pancreas. Interacts simultaneously with SNAPIN and SYN4. Interacts with STX1A. Interacts with STX12. Interacts tightly to multiple syntaxins and synaptobrevins/VAMPs. Interacts with ZDHHC13 (via ANK repeats). Interacts with ZDHHC17 (via ANK repeats). Post-translationally, (Microbial infection) Targeted and hydrolyzed by C.botulinum neurotoxin type A (BoNT/A, botA) which hydrolyzes the 202-Thr-|-Arg-203 bond; the in vitro reaction is not highly efficient. (Microbial infection) Targeted and hydrolyzed by C.botulinum neurotoxin type E (BoNT/E) which hydrolyzes the 185-Arg-|-Ile-186 bond; the in vitro reaction is more efficient than that of BoNT/A. Expressed in non-neuronal tissues.

The protein resides in the cell membrane. Its subcellular location is the synapse. It is found in the synaptosome. Essential component of the high affinity receptor for the general membrane fusion machinery and an important regulator of transport vesicle docking and fusion. This chain is Synaptosomal-associated protein 23 (Snap23), found in Mus musculus (Mouse).